The primary structure comprises 369 residues: 3-dehydroquinate synthase (369 aa).

NAD(+) is bound by residues 80-85, 114-118, 138-139, Lys-151, Lys-160, and 178-181; these read DGEQYK, GVIGD, TT, and TLKT. The Zn(2+) site is built by Glu-193, His-256, and His-273.

This sequence belongs to the sugar phosphate cyclases superfamily. Dehydroquinate synthase family. Co(2+) serves as cofactor. The cofactor is Zn(2+). Requires NAD(+) as cofactor.

Its subcellular location is the cytoplasm. The enzyme catalyses 7-phospho-2-dehydro-3-deoxy-D-arabino-heptonate = 3-dehydroquinate + phosphate. It participates in metabolic intermediate biosynthesis; chorismate biosynthesis; chorismate from D-erythrose 4-phosphate and phosphoenolpyruvate: step 2/7. Catalyzes the conversion of 3-deoxy-D-arabino-heptulosonate 7-phosphate (DAHP) to dehydroquinate (DHQ). The protein is 3-dehydroquinate synthase of Psychrobacter cryohalolentis (strain ATCC BAA-1226 / DSM 17306 / VKM B-2378 / K5).